The primary structure comprises 350 residues: RING finger protein 44 (350 aa).

An RING-type; atypical zinc finger spans residues 298 to 339 (CVVCFSDFEVRQLLRVLPCNHEFHAKCVDKWLKANRTCPICR).

In Rattus norvegicus (Rat), this protein is RING finger protein 44 (Rnf44).